A 510-amino-acid chain; its full sequence is Peptide transporter imqJ (510 aa).

3 helical membrane-spanning segments follow: residues 1 to 21 (MVNQ…AVVA), 31 to 51 (IIFS…SSLP), and 57 to 77 (GISL…TGGI). Residue asparagine 80 is glycosylated (N-linked (GlcNAc...) asparagine). 4 helical membrane passes run 116–136 (IFTT…LITI), 143–163 (FSAA…IVLV), 231–251 (IFIL…NFIS), and 269–289 (IDPI…FPFL). The Fe2OG dioxygenase domain maps to 348–468 (PAASEIRLLY…RCSSVFFFKA (121 aa)). Histidine 377 and aspartate 379 together coordinate Fe cation. The N-linked (GlcNAc...) asparagine glycan is linked to asparagine 421. Residue histidine 439 participates in Fe cation binding. A 2-oxoglutarate-binding site is contributed by arginine 459.

This sequence belongs to the major facilitator superfamily. Proton-dependent oligopeptide transporter (POT/PTR) (TC 2.A.17) family.

The protein localises to the membrane. Functionally, peptide transporter; part of the gene cluster that mediates the biosynthesis of imizoquins A to D, tripeptide-derived alkaloids that serve a protective role against oxidative stress that are essential for normal germination. This Aspergillus flavus (strain ATCC 200026 / FGSC A1120 / IAM 13836 / NRRL 3357 / JCM 12722 / SRRC 167) protein is Peptide transporter imqJ.